The primary structure comprises 124 residues: Desulfoferrodoxin homolog (124 aa).

Residues cysteine 10, cysteine 13, cysteine 29, cysteine 30, histidine 49, histidine 69, histidine 75, cysteine 117, and histidine 120 each contribute to the Fe cation site.

The protein belongs to the desulfoferrodoxin family. The cofactor is Fe(3+). Cu(2+) is required as a cofactor.

The sequence is that of Desulfoferrodoxin homolog from Methanothermobacter thermautotrophicus (strain ATCC 29096 / DSM 1053 / JCM 10044 / NBRC 100330 / Delta H) (Methanobacterium thermoautotrophicum).